A 486-amino-acid chain; its full sequence is Hematopoietic lineage cell-specific protein (486 aa).

Residues 27-66 (FVNDISEKEQRWGAKTIEGSGRTEHINIHQLRNKVSEEHD) form an involved in HAX-1 binding region. An N6-acetyllysine modification is found at K41. Cortactin repeat units follow at residues 79-115 (ASHG…SQTD), 116-152 (AAKG…SQKD), and 153-189 (YSRG…SQRD). K123 is subject to N6-acetyllysine. Y140 bears the Phosphotyrosine mark. The Cortactin 4; truncated repeat unit spans residues 190 to 212 (YAKGFGGQYGIQKDRVDKSAVGF). The residue at position 192 (K192) is an N6-acetyllysine. Phosphotyrosine is present on Y198. Position 222 is a phosphotyrosine; by FGR (Y222). K241 carries the N6-acetyllysine modification. The span at 243 to 276 (ESMAEEKRKREEEEKAQQVARRQQERKAVTKRSP) shows a compositional bias: basic and acidic residues. Residues 243–419 (ESMAEEKRKR…SALAGSSGCP (177 aa)) form a disordered region. S275 carries the post-translational modification Phosphoserine. Phosphothreonine is present on T308. Positions 315–324 (EPVRTSREHP) are enriched in basic and acidic residues. 2 stretches are compositionally biased toward acidic residues: residues 353–383 (QVEE…DVEE) and 390–405 (EDEP…EPED). Phosphotyrosine; by SYK and FES occurs at positions 378 and 397. The segment covering 406 to 419 (SSFSSALAGSSGCP) has biased composition (low complexity). An SH3 domain is found at 428 to 486 (ALGISAVAVYDYQGEGSDELSFDPDDVITDIEMVDEGWWRGRCHGHFGLFPANYVKLLE).

Associates with the SH2 and SH3 domains of LCK. Binding to he LCK SH3 domain occurs constitutively, while binding to the LCK SH2 domain occurs only upon TCR stimulation. A similar binding pattern was observed with LYN, but not with FYN in which the FYN SH2 region associates upon TCR stimulation but the FYN SH3 region does not associate regardless of TCR stimulation. Directly associates with HAX1, through binding to its C-terminal region. Interacts with HS1BP3. Interacts with FES/FPS. Interacts (via SH2 domain) with FGR. Forms a multiprotein complex with LYN and ANKRD54. Post-translationally, phosphorylated by FES. Phosphorylated by LYN, FYN and FGR after cross-linking of surface IgM on B-cells. Phosphorylation by LYN, FYN and FGR requires prior phosphorylation by SYK or FES. Expressed only in tissues and cells of hematopoietic origin.

It is found in the membrane. The protein localises to the cytoplasm. It localises to the mitochondrion. In terms of biological role, substrate of the antigen receptor-coupled tyrosine kinase. Plays a role in antigen receptor signaling for both clonal expansion and deletion in lymphoid cells. May also be involved in the regulation of gene expression. This chain is Hematopoietic lineage cell-specific protein (HCLS1), found in Homo sapiens (Human).